Reading from the N-terminus, the 524-residue chain is Probable aminopeptidase NPEPL1 (524 aa).

Zn(2+)-binding residues include lysine 260 and aspartate 265. Lysine 272 is an active-site residue. Zn(2+) contacts are provided by aspartate 283, aspartate 342, and glutamate 344. Arginine 346 is an active-site residue.

Belongs to the peptidase M17 family. Zn(2+) is required as a cofactor. Requires Mn(2+) as cofactor.

Probably catalyzes the removal of unsubstituted N-terminal amino acids from various peptides. The sequence is that of Probable aminopeptidase NPEPL1 (Npepl1) from Mus musculus (Mouse).